A 358-amino-acid chain; its full sequence is Insulin gene enhancer protein ISL-2A (358 aa).

LIM zinc-binding domains follow at residues 27-80 and 89-143; these read CVGC…CKRD and CANC…RADH. The homeobox DNA-binding region spans 190 to 249; that stretch reads TTRVRTVLNEKQLHTLRTCYNANPRPDALMKEQLVEMTGLSPRVIRVWFQNKRCKDKKRS. Over residues 325 to 335 the composition is skewed to low complexity; the sequence is ESGSMGNSSGS. Residues 325–358 form a disordered region; sequence ESGSMGNSSGSDVTSLSSQLPDTPNSMVASPVDT. Positions 336–358 are enriched in polar residues; sequence DVTSLSSQLPDTPNSMVASPVDT.

Its subcellular location is the nucleus. Its function is as follows. Binds to one of the cis-acting domain of the insulin gene enhancer. May be involved in subtype specialization of primary motoneurons. This Oncorhynchus tshawytscha (Chinook salmon) protein is Insulin gene enhancer protein ISL-2A (isl2a).